We begin with the raw amino-acid sequence, 394 residues long: NAC domain-containing protein 26 (394 aa).

The NAC domain maps to 7 to 156 (VPPGFRFHPT…GWVVCRVFKK (150 aa)). A DNA-binding region spans residues 107 to 162 (IGMRKTLVFYKGRAPNGQKSDWIMHEYRLETSENGTPQEEGWVVCRVFKKKLAATV).

This sequence belongs to the plant vascular related NAC-domain protein family. In terms of assembly, interacts with NAC083/VNI2. Detected in root vessels of protoxylems, outermost metaxylems, inner metaxylems, shoots and hypocotyls. Expressed in roots, hypocotyls, cotyledons and leaves. Expressed in developing xylems. Specifically expressed in vessels in the secondary xylem of the root-hypocotyl region, and in vessels but not in interfascicular fibers in stems.

Its subcellular location is the nucleus. Transcription activator that binds to the secondary wall NAC binding element (SNBE), 5'-(T/A)NN(C/T)(T/C/G)TNNNNNNNA(A/C)GN(A/C/T)(A/T)-3', in the promoter of target genes. Involved in xylem formation by promoting the expression of secondary wall-associated transcription factors and of genes involved in secondary wall biosynthesis and programmed cell death, genes driven by the secondary wall NAC binding element (SNBE). Triggers thickening of secondary walls. The protein is NAC domain-containing protein 26 of Arabidopsis thaliana (Mouse-ear cress).